A 276-amino-acid polypeptide reads, in one-letter code: MKRPWGKAVVKDPNPKITVHGFNNLTKSLSFNIFDIAYAKTEQHRQEYIEYIDELYNAERLTEILTNVTNIIGANILNVARQDYEPQGASVTMLIAEHETPPVGTDWDEEGPGPLPETVVAHLDKSHVTVHTYPESHPDNGISTFRVDVDVSTCGVISPLRALNYLIHSFDSDIVTVDYRVRGMTRDLDGTKHYIDHDINSIQNFLTEDTQNAYQMIDVNVYQENIFHTKMLLKDFDIDNYLFGAGRDEFAQTELDQIEERMKTEMLEIFYSRNLG.

The active-site Schiff-base intermediate with substrate; via pyruvic acid is the Ser126. A Pyruvic acid (Ser); by autocatalysis modification is found at Ser126. His131 acts as the Proton acceptor; for processing activity in catalysis. The Proton donor; for catalytic activity role is filled by Cys154.

It belongs to the prokaryotic AdoMetDC family. Type 2 subfamily. In terms of assembly, heterooctamer of four alpha and four beta chains arranged as a tetramer of alpha/beta heterodimers. Pyruvate is required as a cofactor. Is synthesized initially as an inactive proenzyme. Formation of the active enzyme involves a self-maturation process in which the active site pyruvoyl group is generated from an internal serine residue via an autocatalytic post-translational modification. Two non-identical subunits are generated from the proenzyme in this reaction, and the pyruvate is formed at the N-terminus of the alpha chain, which is derived from the carboxyl end of the proenzyme. The post-translation cleavage follows an unusual pathway, termed non-hydrolytic serinolysis, in which the side chain hydroxyl group of the serine supplies its oxygen atom to form the C-terminus of the beta chain, while the remainder of the serine residue undergoes an oxidative deamination to produce ammonia and the pyruvoyl group blocking the N-terminus of the alpha chain.

The enzyme catalyses S-adenosyl-L-methionine + H(+) = S-adenosyl 3-(methylsulfanyl)propylamine + CO2. It functions in the pathway amine and polyamine biosynthesis; S-adenosylmethioninamine biosynthesis; S-adenosylmethioninamine from S-adenosyl-L-methionine: step 1/1. Catalyzes the decarboxylation of S-adenosylmethionine to S-adenosylmethioninamine (dcAdoMet), the propylamine donor required for the synthesis of the polyamines spermine and spermidine from the diamine putrescine. The sequence is that of S-adenosylmethionine decarboxylase proenzyme from Alcanivorax borkumensis (strain ATCC 700651 / DSM 11573 / NCIMB 13689 / SK2).